Reading from the N-terminus, the 1380-residue chain is DNA-directed RNA polymerase subunit beta (1380 aa).

This sequence belongs to the RNA polymerase beta chain family. The RNAP catalytic core consists of 2 alpha, 1 beta, 1 beta' and 1 omega subunit. When a sigma factor is associated with the core the holoenzyme is formed, which can initiate transcription.

It carries out the reaction RNA(n) + a ribonucleoside 5'-triphosphate = RNA(n+1) + diphosphate. In terms of biological role, DNA-dependent RNA polymerase catalyzes the transcription of DNA into RNA using the four ribonucleoside triphosphates as substrates. This is DNA-directed RNA polymerase subunit beta from Sinorhizobium medicae (strain WSM419) (Ensifer medicae).